The primary structure comprises 969 residues: Integrator complex subunit 4 (969 aa).

HEAT repeat units follow at residues 68–107 (AESV…TAGF), 147–185 (VSHR…VEAS), 192–230 (NAVA…RGLK), 231–265 (LQQA…SQLY), 279–315 (IRLV…LQVS), 371–407 (NLID…ARSS), 408–446 (APFA…NITL), and 448–486 (EDQL…CIQL). The segment covering 928–949 (RASNSTWGESTETVPSTESSTE) has biased composition (low complexity). Residues 928–950 (RASNSTWGESTETVPSTESSTEG) form a disordered region.

Belongs to the Integrator subunit 4 family. As to quaternary structure, component of the Integrator complex, composed of core subunits INTS1, INTS2, INTS3, INTS4, INTS5, INTS6, INTS7, INTS8, INTS9/RC74, INTS10, INTS11/CPSF3L, INTS12, INTS13, INTS14 and INTS15. The core complex associates with protein phosphatase 2A subunits PPP2CA and PPP2R1A, to form the Integrator-PP2A (INTAC) complex. INTS4 is part of the RNA endonuclease subcomplex, composed of INTS4, INTS9, INTS11 and inositol hexakisphosphate (InsP6).

The protein localises to the nucleus. It localises to the cytoplasm. In terms of biological role, component of the integrator complex, a multiprotein complex that terminates RNA polymerase II (Pol II) transcription in the promoter-proximal region of genes. The integrator complex provides a quality checkpoint during transcription elongation by driving premature transcription termination of transcripts that are unfavorably configured for transcriptional elongation: the complex terminates transcription by (1) catalyzing dephosphorylation of the C-terminal domain (CTD) of Pol II subunit POLR2A/RPB1 and SUPT5H/SPT5, (2) degrading the exiting nascent RNA transcript via endonuclease activity and (3) promoting the release of Pol II from bound DNA. The integrator complex is also involved in terminating the synthesis of non-coding Pol II transcripts, such as enhancer RNAs (eRNAs), small nuclear RNAs (snRNAs), telomerase RNAs and long non-coding RNAs (lncRNAs). The polypeptide is Integrator complex subunit 4 (ints4) (Xenopus laevis (African clawed frog)).